Consider the following 530-residue polypeptide: MSELFSRRLALLGEPANQSLLRHCLHGIERECLRVDAAGELARTPHPAALGSALTHPYITTDYSEALLEFITPAETDSAATLAALERVHRFACAKLDGEYLWSPSMPCPLPAEEDIPIARYGNSHIGRLKHVYRKGLALRYGKTMQCIAGIHYNFSLPEELWPLLQRAEGDVRGVRGVRDFQSERYIALIRNFRRYSWLLMYLFGASPALDKSFLRGRPHHLQELDAETLYLPWATSLRMSDLGYHNNAQADLTPCYNDLASYTDSLRRAVSTPYAPYAAIGTQRDGEWLQLNTNVLQIENEYYSTIRPKRVTASGERPIQALVARGVQYVEVRCLDIDPFLPLGIDLDEARFLDAFLLFCALEDSPCLAAGECASCTGNFLKVVKEGRRPGLHLQRHGQPMPLAAWAGELLERLQPLAALFDRAYGGDGYEKALHAQQAKVADPELTPSARLLATLRERGESFRAFALRQSLAHAESLRARPLGEEERQAFEAEARASLAEQAELERRDTGSFDDFVAAYQASIQGDGG.

This sequence belongs to the glutamate--cysteine ligase type 1 family. Type 1 subfamily.

It catalyses the reaction L-cysteine + L-glutamate + ATP = gamma-L-glutamyl-L-cysteine + ADP + phosphate + H(+). It functions in the pathway sulfur metabolism; glutathione biosynthesis; glutathione from L-cysteine and L-glutamate: step 1/2. The protein is Glutamate--cysteine ligase of Azotobacter vinelandii (strain DJ / ATCC BAA-1303).